The following is a 244-amino-acid chain: Sortase B (244 aa).

The Cytoplasmic portion of the chain corresponds to 1-6 (MRMKRF). Residues 7–24 (LTIVQILLVVIIIIFGYK) traverse the membrane as a helical segment. Topologically, residues 25 to 244 (IVQTYIEDKQ…VVVAKIIKVS (220 aa)) are extracellular. Cys-223 acts as the Acyl-thioester intermediate in catalysis.

This sequence belongs to the bacterial sortase family. Class B subfamily.

It localises to the cell membrane. It carries out the reaction The enzyme catalyzes a cell wall sorting reaction in which a surface protein with a sorting signal containing a NPXTN motif is cleaved between the Thr and Asn residue. The resulting threonine carboxyl end of the protein is covalently attached to a pentaglycine cross-bridge of peptidoglycan.. With respect to regulation, inhibited by MTSET (2-(Trimethylammonium)-ethyl-methanethiosulfonate) and E64 ([n- (l-3-trans-carboxyoxirane-2-carbonyl)-l-leucyl]-amido(4-guanido)butane). Inhibited by coptisine. Its function is as follows. Transpeptidase that anchors surface proteins to the cell wall. Recognizes and modifies its substrate by proteolytic cleavage of a C-terminal sorting signal. Following cleavage, a covalent intermediate is formed via a thioester bond between the sortase and its substrate, which is then transferred and covalently attached to the cell wall. This sortase recognizes an Asn-Pro-Gln-Thr-Asn (NPQTN) motif in IsdC, which is cleaved by the sortase between the threonine and aspargine residues; may only have 1 substrate in this bacterium. May be dedicated to the process of iron acquisition during bacterial infection. The sequence is that of Sortase B from Staphylococcus aureus (strain NCTC 8325 / PS 47).